A 550-amino-acid chain; its full sequence is Ribosomal protein S6 kinase beta (550 aa).

The Protein kinase domain maps to 83 to 344 (FQLLKVLGKG…AEEIKSHAFF (262 aa)). ATP is bound by residues 89–97 (LGKGGYGKV) and lysine 115. Aspartate 210 (proton acceptor) is an active-site residue. The region spanning 345–415 (KTTDWNLVYA…VAPSVLEMMN (71 aa)) is the AGC-kinase C-terminal domain. Threonine 404 is subject to Phosphothreonine. Disordered stretches follow at residues 433–466 (RAGAAKSPRKPGDPETASILHGGHSNLFGHGPNS) and 484–550 (TAGG…KRVM). Position 439 is a phosphoserine (serine 439). The span at 520-534 (TTTGNGSTTTTRPSN) shows a compositional bias: low complexity.

The protein belongs to the protein kinase superfamily. AGC Ser/Thr protein kinase family. S6 kinase subfamily. Mg(2+) is required as a cofactor. May be phosphorylated on Thr-404 by let-363/TOR.

It is found in the cell projection. It localises to the axon. The protein resides in the perikaryon. It catalyses the reaction L-seryl-[protein] + ATP = O-phospho-L-seryl-[protein] + ADP + H(+). It carries out the reaction L-threonyl-[protein] + ATP = O-phospho-L-threonyl-[protein] + ADP + H(+). Its function is as follows. Serine/threonine-protein kinase which regulates mRNA translation. Negatively regulates lifespan and resistance to starvation, oxidative stress, protein aggregation and P.aeruginosa-mediated infection. May regulate these processes by preventing the activation of transcription factor hif-1. Required, probably downstream of let-363/TOR, for the establishment of the proper number of germline progenitors by promoting cell cycle progression and preventing differentiation during larval development. Regulates germ cell size. In addition required for sperm production and embryo viability. Involved in axon regeneration of PLM and ALM neurons by inhibiting growth cone formation early after axotomy and later by inhibiting axon extension. Functions in axon regeneration and lifespan probably by preventing aak-2/AMPK activation. Negatively regulates autophagy. This is Ribosomal protein S6 kinase beta from Caenorhabditis elegans.